The sequence spans 102 residues: Small ribosomal subunit protein uS10 (102 aa).

It belongs to the universal ribosomal protein uS10 family. In terms of assembly, part of the 30S ribosomal subunit.

In terms of biological role, involved in the binding of tRNA to the ribosomes. The sequence is that of Small ribosomal subunit protein uS10 from Hyperthermus butylicus (strain DSM 5456 / JCM 9403 / PLM1-5).